We begin with the raw amino-acid sequence, 285 residues long: MSIVLRLLSVLKHQQNKMQPELSVSNYRLLDYSMEWSSSSVAALPTSSEKTVMMPAKATSSRKRHRKPKLQYAKRRFSPVNPNDLVLVRQEPTHCVRLVFPLSKRWIHFDGLVYSLARLNVSMTVDYHVTLALIHAPEAGECFGNLLHLTPLLKDCLLEFKKLCILGKTLTILASEWPFFTGVKKNKDNLTFPKAVEWLKEHGYEIYHSQLPLHMSLAKLHDLPQAQFTEAVGLCHYFDPREFALPCALEVVKIGGGKVNGRSIPLVRFPINNEFKFIPYLYQCA.

The chain is Non-structural protein 3c from Bat coronavirus 133/2005 (BtCoV).